The sequence spans 477 residues: Dihydrolipoyl dehydrogenase 3 (477 aa).

FAD-binding positions include 39–47 (EKGEYGGAC), lysine 56, and alanine 118. A disulfide bridge connects residues cysteine 47 and cysteine 52. Residues 186 to 190 (GAGYI), glutamate 209, and 279 to 282 (AVGR) each bind NAD(+). Residues aspartate 322 and alanine 330 each coordinate FAD. Histidine 454 serves as the catalytic Proton acceptor.

Belongs to the class-I pyridine nucleotide-disulfide oxidoreductase family. In terms of assembly, homodimer. Requires FAD as cofactor.

It is found in the cytoplasm. It carries out the reaction N(6)-[(R)-dihydrolipoyl]-L-lysyl-[protein] + NAD(+) = N(6)-[(R)-lipoyl]-L-lysyl-[protein] + NADH + H(+). The sequence is that of Dihydrolipoyl dehydrogenase 3 (lpdA3) from Haloarcula marismortui (strain ATCC 43049 / DSM 3752 / JCM 8966 / VKM B-1809) (Halobacterium marismortui).